A 352-amino-acid chain; its full sequence is uncharacterized protein (352 aa).

This is an uncharacterized protein from Acanthamoeba polyphaga mimivirus (APMV).